Here is a 292-residue protein sequence, read N- to C-terminus: Protein PHR1-LIKE 3 (292 aa).

Positions 34–94 (TDPKPRLRWT…HLQKFRLGRQ (61 aa)) constitute an HTH myb-type domain. Positions 65–90 (PKTIMRTMGVKGLTLYHLKSHLQKFR) form a DNA-binding region, H-T-H motif. A coiled-coil region spans residues 137–157 (TEALRAQMEVQRRLHEQLEVQ). Positions 150 to 155 (LHEQLE) match the LHEQLE motif.

This sequence belongs to the MYB-CC family. Homo- and heterodimers. Interacts with PHL2, but not with PHR1.

It localises to the nucleus. Transcriptional activator. Probable component of the central regulatory system controlling transcriptional responses to Pi starvation. Binds in a sequence-specific manner to phosphate starvation-regulated promoters. Required for female gametophyte development and function. The polypeptide is Protein PHR1-LIKE 3 (Arabidopsis thaliana (Mouse-ear cress)).